We begin with the raw amino-acid sequence, 199 residues long: Adenylate kinase (199 aa).

ATP is bound at residue 8–13; that stretch reads GAGKGT. Residues 28 to 57 form an NMP region; the sequence is STGDIFRANIKNKTELGQQVKAIVDAGDYV. Residues Thr-29, Arg-34, 55–57, 83–86, and Gln-90 contribute to the AMP site; these read DYV and GYPR. Positions 124-134 are LID; sequence KRAREQGRADD. Arg-125 is an ATP binding site. The AMP site is built by Arg-131 and Arg-142. An ATP-binding site is contributed by Gly-170.

The protein belongs to the adenylate kinase family. Monomer.

The protein localises to the cytoplasm. It catalyses the reaction AMP + ATP = 2 ADP. It participates in purine metabolism; AMP biosynthesis via salvage pathway; AMP from ADP: step 1/1. Its function is as follows. Catalyzes the reversible transfer of the terminal phosphate group between ATP and AMP. Plays an important role in cellular energy homeostasis and in adenine nucleotide metabolism. This is Adenylate kinase from Leifsonia xyli subsp. xyli (strain CTCB07).